A 215-amino-acid chain; its full sequence is Elongation factor Ts (215 aa).

Positions 80–83 (TDFV) are involved in Mg(2+) ion dislocation from EF-Tu.

The protein belongs to the EF-Ts family.

The protein localises to the cytoplasm. Its function is as follows. Associates with the EF-Tu.GDP complex and induces the exchange of GDP to GTP. It remains bound to the aminoacyl-tRNA.EF-Tu.GTP complex up to the GTP hydrolysis stage on the ribosome. The protein is Elongation factor Ts of Heliobacterium modesticaldum (strain ATCC 51547 / Ice1).